The following is a 521-amino-acid chain: BAR/IMD domain-containing adapter protein 2 (521 aa).

Residues 1 to 250 enclose the IMD domain; the sequence is MSLSRSEEMH…VQLMQQIASS (250 aa). Residues 132–153 are a coiled coil; it reads DALDKCQAELKKLRKKSQGSKN. S262, S324, S326, and S337 each carry phosphoserine. Positions 299–370 are disordered; sequence VMNGVAGPDS…TLPRSSSMAA (72 aa). A compositionally biased stretch (low complexity) spans 321-335; sequence QPKSLSPPQSQSKLS. T341 is modified (phosphothreonine). S347 carries the post-translational modification Phosphoserine. A compositionally biased stretch (polar residues) spans 349–368; that stretch reads TPKNSYATTENKTLPRSSSM. The residue at position 361 (T361) is a Phosphothreonine. A phosphoserine mark is found at S367, S385, S396, and S455. Positions 375–438 constitute an SH3 domain; the sequence is NGRMRVKAIF…PFSYTRVLDS (64 aa). A disordered region spans residues 445-480; that stretch reads HMSLQQGKSSSTGNLLDKDDLAVPPPDYGTSSRAFP. Positions 447–458 are enriched in polar residues; the sequence is SLQQGKSSSTGN.

Homodimer. Interacts with CDC42 and RAC1 that have been activated by GTP binding. Interacts with ATN1, ADGRB1, DIAPH1, EPS8, SHANK1, SHANK2, SHANK3, TIAM1, WASF1 and WASF2. Interacts with ENAH after recruitment of CDC42. In terms of processing, phosphorylated on tyrosine residues by INSR in response to insulin treatment.

It localises to the cytoplasm. The protein resides in the membrane. It is found in the cell projection. Its subcellular location is the filopodium. The protein localises to the ruffle. It localises to the cytoskeleton. Functionally, adapter protein that links membrane-bound small G-proteins to cytoplasmic effector proteins. Necessary for CDC42-mediated reorganization of the actin cytoskeleton and for RAC1-mediated membrane ruffling. Involved in the regulation of the actin cytoskeleton by WASF family members and the Arp2/3 complex. Plays a role in neurite growth. Acts syngeristically with ENAH to promote filipodia formation. Plays a role in the reorganization of the actin cytoskeleton in response to bacterial infection. Participates in actin bundling when associated with EPS8, promoting filopodial protrusions. This is BAR/IMD domain-containing adapter protein 2 (BAIAP2) from Cricetulus griseus (Chinese hamster).